The sequence spans 242 residues: Caspase-14 (242 aa).

A propeptide spanning residues 1-5 is cleaved from the precursor; the sequence is MSNPR. Catalysis depends on residues histidine 89 and cysteine 132. The propeptide occupies 147 to 152; it reads EIVMVI.

Belongs to the peptidase C14A family. Heterodimer of a large and a small subunit, both processed from the precursor; the mature active form is a p17/p10 dimer and the intermediate form a p20/p8 dimer. Maturation by proteolytic processing appears to be a two-step process. The precursor is processed by KLK7 to yield the p20/p8 intermediate form which acts on the precursor to yield the p17/p10 mature form. Initially, cleavage between Ile-152 and Lys-153 has been proposed to yield the large and small subunits of the active enzyme. In terms of tissue distribution, expressed in keratinocytes of adult skin suprabasal layers (from spinous layers to the stratum granulosum and stratum corneum) (at protein level). Expressed in keratinocytes of hair shaft and sebaceous glands (at protein level). In psoriatic skin only expressed at very low levels. The p17/10 mature form is expressed in epidermis stratum corneum, the p20/p8 intermediate form in epidermis upper granular cells of the stratum granulosum.

It localises to the cytoplasm. The protein localises to the nucleus. Inhibited by caspase-1 inhibitor YVAD-FMK and the pan-caspase inhibitor VAD-FMK. In terms of biological role, non-apoptotic caspase involved in epidermal differentiation. Is the predominant caspase in epidermal stratum corneum. Seems to play a role in keratinocyte differentiation and is required for cornification. Regulates maturation of the epidermis by proteolytically processing filaggrin. In vitro has a preference for the substrate [WY]-X-X-D motif and is active on the synthetic caspase substrate WEHD-ACF. Involved in processing of prosaposin in the epidermis. May be involved in retinal pigment epithelium cell barrier function. Involved in DNA degradation in differentiated keratinocytes probably by cleaving DFFA/ICAD leading to liberation of DFFB/CAD. In Homo sapiens (Human), this protein is Caspase-14 (CASP14).